A 319-amino-acid chain; its full sequence is Ferrochelatase (319 aa).

Fe cation is bound by residues His-192 and Glu-271.

This sequence belongs to the ferrochelatase family.

Its subcellular location is the cytoplasm. It carries out the reaction heme b + 2 H(+) = protoporphyrin IX + Fe(2+). It participates in porphyrin-containing compound metabolism; protoheme biosynthesis; protoheme from protoporphyrin-IX: step 1/1. Functionally, catalyzes the ferrous insertion into protoporphyrin IX. This chain is Ferrochelatase, found in Geotalea daltonii (strain DSM 22248 / JCM 15807 / FRC-32) (Geobacter daltonii).